A 118-amino-acid polypeptide reads, in one-letter code: Non-specific lipid-transfer protein 1 (118 aa).

Positions 1–25 (MASLRVSCLVALMCMVVISAPMAEA) are cleaved as a signal peptide. Cystine bridges form between C29-C76, C39-C53, C54-C99, and C74-C113.

This sequence belongs to the plant LTP family.

In terms of biological role, plant non-specific lipid-transfer proteins transfer phospholipids as well as galactolipids across membranes. May play a role in wax or cutin deposition in the cell walls of expanding epidermal cells and certain secretory tissues. This is Non-specific lipid-transfer protein 1 from Lens culinaris (Lentil).